We begin with the raw amino-acid sequence, 127 residues long: Mitochondrial pyruvate carrier 2 (127 aa).

Topologically, residues 2 to 40 (AAAGARGLRATYHRLMDKVELLLPKKLRPLYNHPAGPRT) are mitochondrial matrix. Lys-26 is subject to N6-acetyllysine. Residues 41-61 (VFFWAPIMKWGLVCAGLADMA) traverse the membrane as a helical segment. Topologically, residues 62–72 (RPAEKLSTAQS) are mitochondrial intermembrane. A helical transmembrane segment spans residues 73–90 (TVLMATGFIWSRYSLVII). Topologically, residues 91–92 (PK) are mitochondrial matrix. A helical membrane pass occupies residues 93–115 (NWSLFAVNFFVGSAGASQLFRIW). At 116-127 (RYNQELKSKGIQ) the chain is on the mitochondrial intermembrane side.

Belongs to the mitochondrial pyruvate carrier (MPC) (TC 2.A.105) family. Homodimer. Homooligomer. Forms heterodimers with MPC1 and MPC1L. The heterodimer is the more stable and dominant form.

The protein resides in the mitochondrion inner membrane. It catalyses the reaction pyruvate(out) + H(+)(out) = pyruvate(in) + H(+)(in). Its function is as follows. Mediates the uptake of pyruvate into mitochondria. In Mus musculus (Mouse), this protein is Mitochondrial pyruvate carrier 2 (Mpc2).